Consider the following 204-residue polypeptide: ATP phosphoribosyltransferase (204 aa).

The protein belongs to the ATP phosphoribosyltransferase family. Short subfamily. As to quaternary structure, heteromultimer composed of HisG and HisZ subunits.

Its subcellular location is the cytoplasm. The enzyme catalyses 1-(5-phospho-beta-D-ribosyl)-ATP + diphosphate = 5-phospho-alpha-D-ribose 1-diphosphate + ATP. The protein operates within amino-acid biosynthesis; L-histidine biosynthesis; L-histidine from 5-phospho-alpha-D-ribose 1-diphosphate: step 1/9. Its function is as follows. Catalyzes the condensation of ATP and 5-phosphoribose 1-diphosphate to form N'-(5'-phosphoribosyl)-ATP (PR-ATP). Has a crucial role in the pathway because the rate of histidine biosynthesis seems to be controlled primarily by regulation of HisG enzymatic activity. This Staphylococcus aureus (strain MRSA252) protein is ATP phosphoribosyltransferase.